The primary structure comprises 530 residues: Autoinducer-2 kinase (530 aa).

It belongs to the FGGY kinase family.

The protein resides in the cytoplasm. The enzyme catalyses (S)-4,5-dihydroxypentane-2,3-dione + ATP = (2S)-2-hydroxy-3,4-dioxopentyl phosphate + ADP + H(+). Catalyzes the phosphorylation of autoinducer-2 (AI-2) to phospho-AI-2, which subsequently inactivates the transcriptional regulator LsrR and leads to the transcription of the lsr operon. Phosphorylates the ring-open form of (S)-4,5-dihydroxypentane-2,3-dione (DPD), which is the precursor to all AI-2 signaling molecules, at the C5 position. The protein is Autoinducer-2 kinase of Salmonella typhimurium (strain LT2 / SGSC1412 / ATCC 700720).